A 672-amino-acid polypeptide reads, in one-letter code: Synaptotagmin-like protein 4 (672 aa).

Residues 4–122 (ILDLSFLSEM…KATGDWFYDQ (119 aa)) enclose the RabBD domain. An FYVE-type zinc finger spans residues 63–105 (CARCQEGLGRLISKSNTCVGCNHLVCRECRVLESNGSWRCKVC). The interval 199–222 (SESLDSYTADSDSTSRRDSLDKSG) is disordered. Phosphoserine is present on residues Ser-201, Ser-204, Ser-217, Ser-221, and Ser-274. In terms of domain architecture, C2 1 spans 357–479 (VTGKIAFSLK…KLDKKLDHCL (123 aa)). Phosphoserine is present on Ser-489. Residues 508 to 634 (PASKLPVGGD…ISSGEVVDWM (127 aa)) form the C2 2 domain.

In terms of assembly, part of a ternary complex containing STX1A and RAB27A. Can bind both dominant negative and dominant active mutants of RAB27A. Binds STXBP1, RAB3A, RAB8A and RAB27B. Interacts with MYO5A. Detected in insulin-secreting cell lines.

The protein localises to the membrane. Its subcellular location is the cytoplasmic vesicle. It is found in the secretory vesicle membrane. Modulates exocytosis of dense-core granules and secretion of hormones in the pancreas and the pituitary. Interacts with vesicles containing negatively charged phospholipids in a Ca(2+)-independent manner. The chain is Synaptotagmin-like protein 4 (Sytl4) from Rattus norvegicus (Rat).